We begin with the raw amino-acid sequence, 635 residues long: Threonine--tRNA ligase (635 aa).

Positions 1–61 (MIKITLKDGK…HKDSSLEILT (61 aa)) constitute a TGS domain. The segment at 242 to 532 (DHRKLGKELD…LIEQYAGAFP (291 aa)) is catalytic. Cysteine 333, histidine 384, and histidine 509 together coordinate Zn(2+).

The protein belongs to the class-II aminoacyl-tRNA synthetase family. As to quaternary structure, homodimer. Zn(2+) serves as cofactor.

It localises to the cytoplasm. It carries out the reaction tRNA(Thr) + L-threonine + ATP = L-threonyl-tRNA(Thr) + AMP + diphosphate + H(+). Functionally, catalyzes the attachment of threonine to tRNA(Thr) in a two-step reaction: L-threonine is first activated by ATP to form Thr-AMP and then transferred to the acceptor end of tRNA(Thr). Also edits incorrectly charged L-seryl-tRNA(Thr). This Clostridium botulinum (strain ATCC 19397 / Type A) protein is Threonine--tRNA ligase.